A 564-amino-acid chain; its full sequence is Cytochrome P450 monooxygenase fsdH (564 aa).

The chain crosses the membrane as a helical span at residues 18–38; the sequence is GSVSLAVLSTLAVVIAGWYIL. Heme is bound at residue C472.

This sequence belongs to the cytochrome P450 family. Heme is required as a cofactor.

Its subcellular location is the membrane. It functions in the pathway mycotoxin biosynthesis. In terms of biological role, cytochrome P450 monooxygenase; part of the gene cluster that mediates the biosynthesis of fusaridione A, a bright yellow trans-fused decalin-containing tetramic acid with antimicrobial activity. The PKS module of fsdS catalyzes the formation of the polyketide unit which is then conjugated to L-tyrosine by the condensation domain of the fsdS NRPS module. Activity of the Dieckmann cyclase domain (RED) results in release of the intermediate fusaridione A. The unstable pyrrolidinedione ring of fusaridione A is opened through a reverse-Dieckmann reaction to afford its ring-opened form. The protein is Cytochrome P450 monooxygenase fsdH of Fusarium heterosporum.